The chain runs to 350 residues: C4-dicarboxylate-binding protein DctB (350 aa).

Positions 1-18 are cleaved as a signal peptide; sequence MKSLLACLALMIAGIATA.

This sequence belongs to the bacterial solute-binding protein 7 family.

The protein resides in the secreted. Functionally, part of the binding-protein-dependent transport system for uptake of C4-dicarboxylates. Responsible for growth on fumarate and succinate but not malate. Is not directly involved in C4-dicarboxylate uptake, but plays a sensory role in the DctS/DctR two-component system which regulates the expression of the dctA C4-dicarboxylate transporter. The protein is C4-dicarboxylate-binding protein DctB (dctB) of Bacillus subtilis (strain 168).